A 498-amino-acid chain; its full sequence is ATP synthase subunit beta, chloroplastic (498 aa).

172 to 179 serves as a coordination point for ATP; it reads GGAGVGKT.

Belongs to the ATPase alpha/beta chains family. As to quaternary structure, F-type ATPases have 2 components, CF(1) - the catalytic core - and CF(0) - the membrane proton channel. CF(1) has five subunits: alpha(3), beta(3), gamma(1), delta(1), epsilon(1). CF(0) has four main subunits: a(1), b(1), b'(1) and c(9-12).

It localises to the plastid. It is found in the chloroplast thylakoid membrane. The catalysed reaction is ATP + H2O + 4 H(+)(in) = ADP + phosphate + 5 H(+)(out). Produces ATP from ADP in the presence of a proton gradient across the membrane. The catalytic sites are hosted primarily by the beta subunits. This chain is ATP synthase subunit beta, chloroplastic, found in Whiteheadia bifolia (Elephants ears).